The following is a 256-amino-acid chain: DNA repair protein RecO (256 aa).

The protein belongs to the RecO family.

Its function is as follows. Involved in DNA repair and RecF pathway recombination. The polypeptide is DNA repair protein RecO (Thiobacillus denitrificans (strain ATCC 25259 / T1)).